Reading from the N-terminus, the 156-residue chain is Small ribosomal subunit protein uS7 (156 aa).

This sequence belongs to the universal ribosomal protein uS7 family. As to quaternary structure, part of the 30S ribosomal subunit. Contacts proteins S9 and S11.

Functionally, one of the primary rRNA binding proteins, it binds directly to 16S rRNA where it nucleates assembly of the head domain of the 30S subunit. Is located at the subunit interface close to the decoding center, probably blocks exit of the E-site tRNA. This chain is Small ribosomal subunit protein uS7, found in Nitrosomonas eutropha (strain DSM 101675 / C91 / Nm57).